Consider the following 217-residue polypeptide: Large ribosomal subunit protein uL1 (217 aa).

Lys122 is modified (N6,N6-dimethyllysine; alternate). Lys122 bears the N6-methyllysine; alternate mark.

It belongs to the universal ribosomal protein uL1 family.

This chain is Large ribosomal subunit protein uL1 (rpl10a), found in Dictyostelium discoideum (Social amoeba).